The chain runs to 819 residues: DNA topoisomerase 4 subunit A (819 aa).

In terms of domain architecture, Topo IIA-type catalytic spans 30–496 (LPDIRDGLKP…QIIEIDTASL (467 aa)). The active-site O-(5'-phospho-DNA)-tyrosine intermediate is tyrosine 118.

The protein belongs to the type II topoisomerase GyrA/ParC subunit family. ParC type 2 subfamily. In terms of assembly, heterotetramer composed of ParC and ParE.

Its subcellular location is the cell membrane. The enzyme catalyses ATP-dependent breakage, passage and rejoining of double-stranded DNA.. In terms of biological role, topoisomerase IV is essential for chromosome segregation. It relaxes supercoiled DNA. Performs the decatenation events required during the replication of a circular DNA molecule. The polypeptide is DNA topoisomerase 4 subunit A (Streptococcus pyogenes serotype M18 (strain MGAS8232)).